The sequence spans 4363 residues: AM-toxin synthetase AMT1 (4363 aa).

The adenylation 1 stretch occupies residues 278–670 (AGQAKQRPHA…GSLLYVGRKD (393 aa)). The region spanning 810–887 (APDSVIARQL…ALAAIAKVIP (78 aa)) is the Carrier 1 domain. O-(pantetheine 4'-phosphoryl)serine is present on S847. Residues 926 to 1340 (EDVYACTPLQ…TLGQIDVLTS (415 aa)) are condensation 1. The interval 1368–1765 (KQARTRPGAI…LGRKDTQIKI (398 aa)) is adenylation 2. A Carrier 2 domain is found at 1884-1961 (PPVTDMEKHV…DQARHVTLLT (78 aa)). S1922 carries the O-(pantetheine 4'-phosphoryl)serine modification. The interval 1999–2410 (EDVYPCTPLQ…ASPSSSTLVS (412 aa)) is condensation 2. Positions 2448–2853 (RKKALAAPQA…GRKDNQVKIR (406 aa)) are adenylation 3. Residues 2977-3053 (LPSTVMEETL…DLAACCTDRR (77 aa)) form the Carrier 3 domain. Residue S3014 is modified to O-(pantetheine 4'-phosphoryl)serine. A condensation 3 region spans residues 3098-3503 (VEDVYPCTPM…ELVSSIETLN (406 aa)). The Carrier 4 domain occupies 3730–3806 (PAVTAMQLAI…SLAVRATENT (77 aa)). Residue S3767 is modified to O-(pantetheine 4'-phosphoryl)serine. A condensation 4 region spans residues 3850–4204 (QDVLPCTSMQ…GLDEIVEHYA (355 aa)).

This sequence belongs to the NRP synthetase family.

The protein operates within mycotoxin biosynthesis. In terms of biological role, nonribosomal peptide synthetase; part of the gene clusters that mediate the biosynthesis of AM-toxins, host-selective toxins (HSTs) causing Alternaria blotch on apple, a worldwide distributed disease. AM-toxins are cyclic depsipeptides containing the 3 residues 2-hydroxy-isovaleric acid (2-HIV), dehydroalanine, L-alanine which are common for all 3 AM-toxins I to III. The fourth precursor is L-alpha-amino-methoxyphenyl-valeric acid (L-Amv) for AM-toxin I, L-alpha-amino-phenyl-valeric acid (L-Apv) for AM-toxin II, and L-alpha-amino-hydroxyphenyl-valeric acid (L-Ahv) for AM-toxin III. AM-toxins have two target sites for affecting susceptible apple cells; they cause invagination of the plasma membrane and electrolyte loss, and chloroplast disorganization. The non-ribosomal peptide synthetase AMT1 contains 4 catalytic modules and is responsible for activation of each residue in AM-toxin. The aldo-keto reductase AMT2 catalyzes the conversion of 2-keto-isovaleric acid (2-KIV) to 2-hydroxy-isovaleric acid (2-HIV), one of the precursor residues incorporated by AMT1 during AM-toxin biosynthesis, by reduction of its ketone to an alcohol. The cytochrome P450 monooxygenase AMT3 and the thioesterase AMT4 are also important for AM-toxin production, but their exact function within the AM-toxin biosynthesis are not known yet. Up to 21 proteins (including AMT1 to AMT4) are predicted to be involved in AM-toxin biosynthesis since their expression ishighly up-regulated in AM-toxin-producing cultures. The protein is AM-toxin synthetase AMT1 of Alternaria alternata (Alternaria rot fungus).